The chain runs to 383 residues: 3-phytase (383 aa).

Residues 1 to 26 (MNHSKTLLLTAAAGLMLTCGAVSSQA) form the signal peptide. Positions 27–30 (KHKL) are excised as a propeptide. In terms of domain architecture, BPP spans 31 to 362 (SDPYHFTVNA…VPWERIADKI (332 aa)). The segment at 364-383 (FHPQVNKQVDPRKMTDRSGK) is disordered. The segment covering 372 to 383 (VDPRKMTDRSGK) has biased composition (basic and acidic residues).

The protein localises to the secreted. It catalyses the reaction 1D-myo-inositol hexakisphosphate + H2O = 1D-myo-inositol 1,2,4,5,6-pentakisphosphate + phosphate. In Bacillus sp. (strain DS11), this protein is 3-phytase (phy).